The chain runs to 99 residues: Acylphosphatase-1 (99 aa).

A2 carries the N-acetylalanine modification. The region spanning 9-99 is the Acylphosphatase-like domain; that stretch reads SVDYEIFGKV…LDYSDFQIVK (91 aa). Residues R24 and N42 contribute to the active site.

It belongs to the acylphosphatase family.

The catalysed reaction is an acyl phosphate + H2O = a carboxylate + phosphate + H(+). The protein is Acylphosphatase-1 (Acyp1) of Mus musculus (Mouse).